We begin with the raw amino-acid sequence, 37 residues long: MKRRPRKWKKKGRMRWKWIKKRIRRLKRQRKKERGLI.

It belongs to the eukaryotic ribosomal protein eS32 family. As to quaternary structure, part of the small ribosomal subunit.

The protein is Small ribosomal subunit protein eS32 of Pyrococcus furiosus (strain ATCC 43587 / DSM 3638 / JCM 8422 / Vc1).